The primary structure comprises 396 residues: Protein ANTAGONIST OF LIKE HETEROCHROMATIN PROTEIN 1 (396 aa).

Composition is skewed to basic residues over residues 1–12 (MAPVKQKKKNKK) and 20–29 (KLAKNKEKKR). The interval 1-29 (MAPVKQKKKNKKKPLDKAKKLAKNKEKKR) is disordered. Positions 6 to 13 (QKKKNKKK) match the Nuclear localization signal motif. A DDE Tnp4 domain is found at 183–348 (IDTTHIIMTL…IILVCCLLHN (166 aa)).

The protein belongs to the HARBI1 family. In terms of assembly, interacts with core components of POLYCOMB REPRESSIVE COMPLEX 2 (PRC2), a PcG protein complex with H3K27me3 histone methyltransferase activity. Associates with plant-specific PRC2 accessory components such as MSI1, EMF2, VRN2, FIE and CLF. A divalent metal cation is required as a cofactor. In terms of tissue distribution, expressed in roots, inflorescence stems, seedlings, leaves, flower buds, inflorescences, and siliques.

It localises to the nucleus. Functionally, transposase-derived protein that may have nuclease activity. Antagonist of polycomb-group (PcG) protein-mediated chromatin silencing, probably by preventing the association of POLYCOMB REPRESSIVE COMPLEX 2 (PRC2) with its accessory components. Needed for full reactivation of several floral homeotic genes that are repressed by PcG. This Arabidopsis thaliana (Mouse-ear cress) protein is Protein ANTAGONIST OF LIKE HETEROCHROMATIN PROTEIN 1.